The sequence spans 213 residues: Orotate phosphoribosyltransferase (213 aa).

K26 serves as a coordination point for 5-phospho-alpha-D-ribose 1-diphosphate. F34–F35 provides a ligand contact to orotate. 5-phospho-alpha-D-ribose 1-diphosphate contacts are provided by residues Y72 to K73, R99, K100, K103, H105, and D124 to A132. Residues T128 and R156 each coordinate orotate.

The protein belongs to the purine/pyrimidine phosphoribosyltransferase family. PyrE subfamily. Homodimer. It depends on Mg(2+) as a cofactor.

The enzyme catalyses orotidine 5'-phosphate + diphosphate = orotate + 5-phospho-alpha-D-ribose 1-diphosphate. Its pathway is pyrimidine metabolism; UMP biosynthesis via de novo pathway; UMP from orotate: step 1/2. Its function is as follows. Catalyzes the transfer of a ribosyl phosphate group from 5-phosphoribose 1-diphosphate to orotate, leading to the formation of orotidine monophosphate (OMP). The polypeptide is Orotate phosphoribosyltransferase (Photobacterium profundum (strain SS9)).